The sequence spans 763 residues: Protein translocase subunit SecA 2 (763 aa).

ATP-binding positions include Gln-83, 101–105 (GEGKT), and Asp-490.

This sequence belongs to the SecA family. In terms of assembly, monomer and homodimer. Part of the essential Sec protein translocation apparatus which comprises SecA, SecYEG and auxiliary proteins SecDF. Other proteins may also be involved.

The protein resides in the cell membrane. It is found in the cytoplasm. The enzyme catalyses ATP + H2O + cellular proteinSide 1 = ADP + phosphate + cellular proteinSide 2.. Part of the Sec protein translocase complex. Interacts with the SecYEG preprotein conducting channel. Has a central role in coupling the hydrolysis of ATP to the transfer of proteins into and across the cell membrane, serving as an ATP-driven molecular motor driving the stepwise translocation of polypeptide chains across the membrane. The polypeptide is Protein translocase subunit SecA 2 (Corynebacterium efficiens (strain DSM 44549 / YS-314 / AJ 12310 / JCM 11189 / NBRC 100395)).